A 205-amino-acid polypeptide reads, in one-letter code: Adenylyl-sulfate kinase (205 aa).

Gly31 to Ser38 lines the ATP pocket. The active-site Phosphoserine intermediate is Ser105.

It belongs to the APS kinase family.

It carries out the reaction adenosine 5'-phosphosulfate + ATP = 3'-phosphoadenylyl sulfate + ADP + H(+). Its pathway is sulfur metabolism; hydrogen sulfide biosynthesis; sulfite from sulfate: step 2/3. Functionally, catalyzes the synthesis of activated sulfate. The protein is Adenylyl-sulfate kinase of Shewanella sp. (strain ANA-3).